The following is a 197-amino-acid chain: Transcription factor FapR (197 aa).

The protein belongs to the FapR family.

In terms of biological role, transcriptional factor involved in regulation of membrane lipid biosynthesis by repressing genes involved in fatty acid and phospholipid metabolism. The chain is Transcription factor FapR from Bacillus anthracis (strain A0248).